The sequence spans 398 residues: Succinate--CoA ligase [ADP-forming] subunit beta (398 aa).

The ATP-grasp domain maps to 9-254 (KAVLREFGVP…ESEEDAKEIE (246 aa)). Residues lysine 46, 53–55 (GRG), glutamate 109, serine 112, and glutamate 117 each bind ATP. 2 residues coordinate Mg(2+): asparagine 209 and aspartate 223. Substrate-binding positions include asparagine 274 and 331–333 (GIM).

The protein belongs to the succinate/malate CoA ligase beta subunit family. In terms of assembly, heterotetramer of two alpha and two beta subunits. It depends on Mg(2+) as a cofactor.

The catalysed reaction is succinate + ATP + CoA = succinyl-CoA + ADP + phosphate. The enzyme catalyses GTP + succinate + CoA = succinyl-CoA + GDP + phosphate. It functions in the pathway carbohydrate metabolism; tricarboxylic acid cycle; succinate from succinyl-CoA (ligase route): step 1/1. Its function is as follows. Succinyl-CoA synthetase functions in the citric acid cycle (TCA), coupling the hydrolysis of succinyl-CoA to the synthesis of either ATP or GTP and thus represents the only step of substrate-level phosphorylation in the TCA. The beta subunit provides nucleotide specificity of the enzyme and binds the substrate succinate, while the binding sites for coenzyme A and phosphate are found in the alpha subunit. This chain is Succinate--CoA ligase [ADP-forming] subunit beta, found in Rhodopseudomonas palustris (strain HaA2).